The chain runs to 441 residues: 2-oxoisovalerate dehydrogenase subunit alpha, mitochondrial (441 aa).

Residues 1–17 (MISQSYRILSRISRNNE) constitute a mitochondrion transit peptide. A thiamine diphosphate-binding site is contributed by 145 to 147 (QYR). K(+) contacts are provided by S194, T199, and Q200.

The protein belongs to the BCKDHA family. In terms of assembly, heterotetramer of alpha and beta chains. The cofactor is thiamine diphosphate.

It is found in the mitochondrion matrix. It catalyses the reaction N(6)-[(R)-lipoyl]-L-lysyl-[protein] + 3-methyl-2-oxobutanoate + H(+) = N(6)-[(R)-S(8)-2-methylpropanoyldihydrolipoyl]-L-lysyl-[protein] + CO2. In terms of biological role, the branched-chain alpha-keto dehydrogenase complex catalyzes the overall conversion of alpha-keto acids to acyl-CoA and CO(2). It contains multiple copies of three enzymatic components: branched-chain alpha-keto acid decarboxylase (E1), lipoamide acyltransferase (E2) and lipoamide dehydrogenase (E3). The sequence is that of 2-oxoisovalerate dehydrogenase subunit alpha, mitochondrial (bkdA) from Dictyostelium discoideum (Social amoeba).